We begin with the raw amino-acid sequence, 319 residues long: Epoxyqueuosine reductase (319 aa).

D128 functions as the Proton donor in the catalytic mechanism. One can recognise a 4Fe-4S ferredoxin-type domain in the interval 173–202 (EANDPHPNYCGTCTRCLSACPTAALVEPAV). C182, C185, C188, C192, C208, C236, C239, and C243 together coordinate [4Fe-4S] cluster.

This sequence belongs to the QueG family. As to quaternary structure, monomer. Cob(II)alamin serves as cofactor. Requires [4Fe-4S] cluster as cofactor.

The protein localises to the cytoplasm. The catalysed reaction is epoxyqueuosine(34) in tRNA + AH2 = queuosine(34) in tRNA + A + H2O. It participates in tRNA modification; tRNA-queuosine biosynthesis. Catalyzes the conversion of epoxyqueuosine (oQ) to queuosine (Q), which is a hypermodified base found in the wobble positions of tRNA(Asp), tRNA(Asn), tRNA(His) and tRNA(Tyr). The chain is Epoxyqueuosine reductase from Gloeobacter violaceus (strain ATCC 29082 / PCC 7421).